Reading from the N-terminus, the 57-residue chain is MTILKWALIFLLVSIVAGVLGFTGISAASADIARFLFYVFVVIFLVLLILGLTIFRA.

Helical transmembrane passes span 6–26 and 35–55; these read WALI…TGIS and FLFY…LTIF.

Belongs to the UPF0391 family.

Its subcellular location is the cell membrane. In Bradyrhizobium diazoefficiens (strain JCM 10833 / BCRC 13528 / IAM 13628 / NBRC 14792 / USDA 110), this protein is UPF0391 membrane protein bsl5717.